The chain runs to 162 residues: Protein archease (162 aa).

Residues aspartate 34, aspartate 161, and isoleucine 162 each contribute to the Ca(2+) site.

It belongs to the archease family. In terms of assembly, component of the tRNA-splicing ligase complex.

Its function is as follows. Component of the tRNA-splicing ligase complex required to facilitate the enzymatic turnover of catalytic subunit RTCB. Together with ddx1, acts by facilitating the guanylylation of RTCB, a key intermediate step in tRNA ligation. The protein is Protein archease of Ictalurus punctatus (Channel catfish).